A 490-amino-acid polypeptide reads, in one-letter code: Probable cytosol aminopeptidase (490 aa).

Lysine 258 and aspartate 263 together coordinate Mn(2+). The active site involves lysine 270. Mn(2+) contacts are provided by aspartate 282, aspartate 341, and glutamate 343. The active site involves arginine 345.

The protein belongs to the peptidase M17 family. Mn(2+) is required as a cofactor.

It localises to the cytoplasm. The enzyme catalyses Release of an N-terminal amino acid, Xaa-|-Yaa-, in which Xaa is preferably Leu, but may be other amino acids including Pro although not Arg or Lys, and Yaa may be Pro. Amino acid amides and methyl esters are also readily hydrolyzed, but rates on arylamides are exceedingly low.. It catalyses the reaction Release of an N-terminal amino acid, preferentially leucine, but not glutamic or aspartic acids.. Functionally, presumably involved in the processing and regular turnover of intracellular proteins. Catalyzes the removal of unsubstituted N-terminal amino acids from various peptides. This is Probable cytosol aminopeptidase from Microcystis aeruginosa (strain NIES-843 / IAM M-2473).